Here is a 315-residue protein sequence, read N- to C-terminus: GTP cyclohydrolase MptA (315 aa).

This sequence belongs to the GTP cyclohydrolase IV family. As to quaternary structure, homodimer. Fe(2+) is required as a cofactor.

The enzyme catalyses GTP + H2O = 7,8-dihydroneopterin 2',3'-cyclic phosphate + formate + diphosphate + H(+). Its pathway is cofactor biosynthesis; 5,6,7,8-tetrahydromethanopterin biosynthesis. In terms of biological role, converts GTP to 7,8-dihydro-D-neopterin 2',3'-cyclic phosphate, the first intermediate in the biosynthesis of coenzyme methanopterin. In Methanococcus maripaludis (strain C5 / ATCC BAA-1333), this protein is GTP cyclohydrolase MptA.